A 606-amino-acid polypeptide reads, in one-letter code: NADH-ubiquinone oxidoreductase chain 5 (606 aa).

Transmembrane regions (helical) follow at residues 1–21 (MNLF…PIMV), 35–55 (YVKN…MMYL), 87–107 (LMFM…SMWY), 114–134 (INQF…LVTA), 140–160 (LFIG…WWFG), 171–191 (AILY…WFLS), 211–233 (FPLM…HPWL), 241–261 (TPVS…FLLV), 272–292 (LIQT…AICA), 301–320 (IIAF…IGLN), 325–347 (AFLH…GSII), 366–386 (LPFT…MPFL), 413–433 (LTAT…ALLG), 457–477 (LLIG…PVIT), 482–502 (MPLH…IIAF), and 582–602 (GLIK…MILF).

This sequence belongs to the complex I subunit 5 family. As to quaternary structure, core subunit of respiratory chain NADH dehydrogenase (Complex I) which is composed of 45 different subunits.

It is found in the mitochondrion inner membrane. It catalyses the reaction a ubiquinone + NADH + 5 H(+)(in) = a ubiquinol + NAD(+) + 4 H(+)(out). Its function is as follows. Core subunit of the mitochondrial membrane respiratory chain NADH dehydrogenase (Complex I) which catalyzes electron transfer from NADH through the respiratory chain, using ubiquinone as an electron acceptor. Essential for the catalytic activity and assembly of complex I. This chain is NADH-ubiquinone oxidoreductase chain 5 (MT-ND5), found in Balaenoptera musculus (Blue whale).